A 299-amino-acid chain; its full sequence is GTPase Era (299 aa).

In terms of domain architecture, Era-type G spans 4 to 171; that stretch reads KSGFVAILGR…VDILSENLEE (168 aa). Residues 12–19 form a G1 region; the sequence is GRPNVGKS. Position 12-19 (12-19) interacts with GTP; sequence GRPNVGKS. The interval 38 to 42 is G2; it reads QTTRN. The segment at 59–62 is G3; that stretch reads DTPG. GTP contacts are provided by residues 59–63 and 121–124; these read DTPGI and NKID. The segment at 121-124 is G4; the sequence is NKID. The tract at residues 150-152 is G5; it reads ISA. The KH type-2 domain maps to 202-280; sequence TREEIPHSVA…FLETWVKVKK (79 aa).

This sequence belongs to the TRAFAC class TrmE-Era-EngA-EngB-Septin-like GTPase superfamily. Era GTPase family. In terms of assembly, monomer.

The protein localises to the cytoplasm. The protein resides in the cell membrane. Its function is as follows. An essential GTPase that binds both GDP and GTP, with rapid nucleotide exchange. Plays a role in 16S rRNA processing and 30S ribosomal subunit biogenesis and possibly also in cell cycle regulation and energy metabolism. The protein is GTPase Era of Streptococcus gordonii (strain Challis / ATCC 35105 / BCRC 15272 / CH1 / DL1 / V288).